The chain runs to 106 residues: ATP-dependent Clp protease adapter protein ClpS (106 aa).

It belongs to the ClpS family. In terms of assembly, binds to the N-terminal domain of the chaperone ClpA.

Involved in the modulation of the specificity of the ClpAP-mediated ATP-dependent protein degradation. The chain is ATP-dependent Clp protease adapter protein ClpS from Cronobacter sakazakii (strain ATCC BAA-894) (Enterobacter sakazakii).